Reading from the N-terminus, the 513-residue chain is Bifunctional purine biosynthesis protein PurH (513 aa).

Residues 1–145 form the MGS-like domain; sequence MTKKAIISVY…KNFKYITVII (145 aa).

Belongs to the PurH family.

It catalyses the reaction (6R)-10-formyltetrahydrofolate + 5-amino-1-(5-phospho-beta-D-ribosyl)imidazole-4-carboxamide = 5-formamido-1-(5-phospho-D-ribosyl)imidazole-4-carboxamide + (6S)-5,6,7,8-tetrahydrofolate. The enzyme catalyses IMP + H2O = 5-formamido-1-(5-phospho-D-ribosyl)imidazole-4-carboxamide. Its pathway is purine metabolism; IMP biosynthesis via de novo pathway; 5-formamido-1-(5-phospho-D-ribosyl)imidazole-4-carboxamide from 5-amino-1-(5-phospho-D-ribosyl)imidazole-4-carboxamide (10-formyl THF route): step 1/1. It participates in purine metabolism; IMP biosynthesis via de novo pathway; IMP from 5-formamido-1-(5-phospho-D-ribosyl)imidazole-4-carboxamide: step 1/1. The chain is Bifunctional purine biosynthesis protein PurH from Caldicellulosiruptor saccharolyticus (strain ATCC 43494 / DSM 8903 / Tp8T 6331).